Here is a 317-residue protein sequence, read N- to C-terminus: UV DNA damage endonuclease (317 aa).

It belongs to the uve1/UvsE family.

Functionally, component in a DNA repair pathway. Removal of UV LIGHT damaged nucleotides. Recognizes pyrimidine dimers and cleave a phosphodiester bond immediately 5' to the lesion. This Bacillus cereus (strain ATCC 10987 / NRS 248) protein is UV DNA damage endonuclease.